A 237-amino-acid chain; its full sequence is C-type lectin domain family 4 member A (237 aa).

The Cytoplasmic portion of the chain corresponds to 1-48; sequence MTSEITYAEVRFKNEFKSSGINTASSAASKERTAPHKSNTGFPKLLCA. The short motif at 5–10 is the ITIM motif element; sequence ITYAEV. The helical; Signal-anchor for type II membrane protein transmembrane segment at 49–69 threads the bilayer; sequence SLLIFFLLLAISFFIAFVIFF. Over 70–237 the chain is Extracellular; the sequence is QKYSQLLEKK…SVCEMMKIHL (168 aa). 3 disulfide bridges follow: cysteine 106-cysteine 117, cysteine 134-cysteine 230, and cysteine 203-cysteine 222. Residues 113–231 form the C-type lectin domain; sequence FSSNCYFIST…CLGPQRSVCE (119 aa). Ca(2+)-binding residues include valine 143, asparagine 145, and glutamate 149. Asparagine 185 is a glycosylation site (N-linked (GlcNAc...) asparagine). Glutamate 195, serine 197, and glutamate 201 together coordinate Ca(2+). Alpha-D-mannopyranose is bound by residues 195 to 197 and glutamate 201; that span reads EPS. Residue 207 to 209 coordinates N-acetyl-D-glucosamine; that stretch reads NFR. 3 residues coordinate Ca(2+): asparagine 218, aspartate 219, and glutamate 231.

In terms of assembly, may interact with PTPN6 via its ITIM motif. As to expression, expressed preferentially in hematopoietic tissues. Expressed in all circulating Ag-presenting cells such as dendritic cells, myeloid cells, monocytes, macrophages, B-cells and epidermal Langerhans cells (at protein level). Expressed in peripheral blood leukocytes, neutrophils, moderate quantities in spleen, lymph node, and bone marrow, and at very low levels in thymus.

It localises to the cell membrane. C-type lectin receptor that binds carbohydrates mannose and fucose but also weakly interacts with N-acetylglucosamine (GlcNAc) in a Ca(2+)-dependent manner. Involved in regulating immune reactivity. Once triggered by antigen, it is internalized by clathrin-dependent endocytosis and delivers its antigenic cargo into the antigen presentation pathway resulting in cross-priming of CD8(+) T cells. This cross-presentation and cross-priming are enhanced by TLR7 and TLR8 agonists with increased expansion of the CD8(+) T cells, high production of IFNG and TNF with reduced levels of IL4, IL5 and IL13. In plasmacytoid dendritic cells, inhibits TLR9-mediated IFNA and TNF production. May be involved via its ITIM motif (immunoreceptor tyrosine-based inhibitory motifs) in the inhibition of B-cell-receptor-mediated calcium mobilization and protein tyrosine phosphorylation. Its function is as follows. (Microbial infection) Involved in the interaction between HIV-1 virus and dendritic cells. Enhances HIV-1 binding/entry and virus infection. Requires ITIM motif-associated signal transduction pathway involving phosphatases PTPN6 and PTPN11, SYK, Src kinases and MAP kinases. This is C-type lectin domain family 4 member A from Homo sapiens (Human).